A 473-amino-acid chain; its full sequence is Adhesive plaque matrix protein 2 (473 aa).

A signal peptide spans Met1 to Gly17. A 3',4'-dihydroxyphenylalanine mark is found at Tyr23, Tyr31, Tyr36, and Tyr43. EGF-like domains are found at residues Pro45–Asn81, Leu82–Cys117, Glu118–Cys154, Glu155–Cys191, Gln192–Cys228, Glu229–Cys265, Lys266–Cys301, Gly302–Glu340, Lys342–Thr378, Lys383–Thr420, and Lys425–Ser461. 33 disulfide bridges follow: Cys49–Cys60, Cys54–Cys69, Cys71–Cys80, Cys86–Cys97, Cys91–Cys106, Cys108–Cys117, Cys122–Cys133, Cys127–Cys143, Cys145–Cys154, Cys159–Cys170, Cys164–Cys180, Cys182–Cys191, Cys196–Cys207, Cys201–Cys217, Cys219–Cys228, Cys233–Cys244, Cys238–Cys254, Cys256–Cys265, Cys270–Cys281, Cys275–Cys290, Cys292–Cys301, Cys306–Cys317, Cys311–Cys328, Cys330–Cys339, Cys346–Cys357, Cys351–Cys366, Cys368–Cys377, Cys387–Cys399, Cys393–Cys408, Cys410–Cys419, Cys429–Cys440, Cys434–Cys449, and Cys451–Cys460. A glycan (N-linked (GlcNAc...) asparagine) is linked at Asn93.

Post-translationally, contains L-DOPA (3',4'-dihydroxyphenylalanine). In terms of tissue distribution, produced by the byssal gland.

The protein resides in the secreted. Functionally, provides adhesiveness to the mussel's foot. Mussels produce one of the strongest water insoluble glues. The mussel's adhesive is a bundle of threads, called a byssus, formed by a fibrous collagenous core coated with adhesive proteins. This chain is Adhesive plaque matrix protein 2 (FP2), found in Mytilus galloprovincialis (Mediterranean mussel).